Consider the following 442-residue polypeptide: Hydroxycinnamoyltransferase 2 (442 aa).

Active-site proton acceptor residues include H159 and D389.

The protein belongs to the plant acyltransferase family. As to expression, expressed in roots and leaves. Expressed at low levels in stems and seeds.

Hydroxycinnamoyl transferase that catalyzes the transfer of an acyl from p-coumaryol-CoA to various acyl acceptors. Can use feruloyl-CoA and caffeoyl-CoA as acyl donors. This chain is Hydroxycinnamoyltransferase 2, found in Oryza sativa subsp. japonica (Rice).